We begin with the raw amino-acid sequence, 393 residues long: NAD(P)H-quinone oxidoreductase subunit H, chloroplastic (393 aa).

The protein belongs to the complex I 49 kDa subunit family. As to quaternary structure, NDH is composed of at least 16 different subunits, 5 of which are encoded in the nucleus.

The protein resides in the plastid. The protein localises to the chloroplast thylakoid membrane. It carries out the reaction a plastoquinone + NADH + (n+1) H(+)(in) = a plastoquinol + NAD(+) + n H(+)(out). The enzyme catalyses a plastoquinone + NADPH + (n+1) H(+)(in) = a plastoquinol + NADP(+) + n H(+)(out). In terms of biological role, NDH shuttles electrons from NAD(P)H:plastoquinone, via FMN and iron-sulfur (Fe-S) centers, to quinones in the photosynthetic chain and possibly in a chloroplast respiratory chain. The immediate electron acceptor for the enzyme in this species is believed to be plastoquinone. Couples the redox reaction to proton translocation, and thus conserves the redox energy in a proton gradient. This Draba nemorosa (Woodland whitlowgrass) protein is NAD(P)H-quinone oxidoreductase subunit H, chloroplastic.